A 218-amino-acid chain; its full sequence is Octanoyltransferase (218 aa).

The BPL/LPL catalytic domain occupies 32-218 (GEAAEAIWLL…LRTFPQHFPD (187 aa)). Substrate contacts are provided by residues 71-78 (RGGQYTYH), 151-153 (AIG), and 164-166 (GLS). C182 functions as the Acyl-thioester intermediate in the catalytic mechanism.

Belongs to the LipB family.

The protein resides in the cytoplasm. It carries out the reaction octanoyl-[ACP] + L-lysyl-[protein] = N(6)-octanoyl-L-lysyl-[protein] + holo-[ACP] + H(+). It participates in protein modification; protein lipoylation via endogenous pathway; protein N(6)-(lipoyl)lysine from octanoyl-[acyl-carrier-protein]: step 1/2. Functionally, catalyzes the transfer of endogenously produced octanoic acid from octanoyl-acyl-carrier-protein onto the lipoyl domains of lipoate-dependent enzymes. Lipoyl-ACP can also act as a substrate although octanoyl-ACP is likely to be the physiological substrate. The protein is Octanoyltransferase of Cereibacter sphaeroides (strain ATCC 17029 / ATH 2.4.9) (Rhodobacter sphaeroides).